Consider the following 378-residue polypeptide: Zinc finger protein DPF3 (378 aa).

Lys99 participates in a covalent cross-link: Glycyl lysine isopeptide (Lys-Gly) (interchain with G-Cter in SUMO2). Positions Leu146 to Asp193 are disordered. The segment covering Asn148–Glu163 has biased composition (acidic residues). Residues Arg168–His186 are compositionally biased toward basic residues. A C2H2-type zinc finger spans residues Tyr198–His221. Residues Glu225–Gly254 are disordered. 2 PHD-type zinc fingers span residues Asn259–Cys319 and Cys316–Leu366. Residues Lys317–Leu332 are interaction with HDGFL2. A Phosphoserine modification is found at Gly323.

It belongs to the requiem/DPF family. In terms of assembly, component of the BAF complex, which includes at least actin (ACTB), ARID1A, ARID1B/BAF250, SMARCA2, SMARCA4/BRG1/BAF190A, ACTL6A/BAF53, ACTL6B/BAF53B, SMARCE1/BAF57, SMARCC1/BAF155, SMARCC2/BAF170, SMARCB1/SNF5/INI1, and one or more of SMARCD1/BAF60A, SMARCD2/BAF60B, or SMARCD3/BAF60C. In muscle cells, the BAF complex also contains DPF3. Interacts with acetylated histones H3 and H4. Component of neuron-specific chromatin remodeling complex (nBAF complex) composed of at least, ARID1A/BAF250A or ARID1B/BAF250B, SMARCD1/BAF60A, SMARCD3/BAF60C, SMARCA2/BRM/BAF190B, SMARCA4/BRG1/BAF190A, SMARCB1/BAF47, SMARCC1/BAF155, SMARCE1/BAF57, SMARCC2/BAF170, DPF1/BAF45B, DPF3/BAF45C, ACTL6B/BAF53B and actin. Interacts with HDGFL2. Interacts with SMARCA4/BRG1/BAF190A, SMARCC1/BAF155 and SMARCD1/BAF60A. As to expression, expressed in the heart and somites. Expressed in cerebellum and spinal cord, but not in cerebral cortex. Expressed specifically in post-mitotic neurons (at protein level).

The protein localises to the nucleus. In terms of biological role, muscle-specific component of the BAF complex, a multiprotein complex involved in transcriptional activation and repression of select genes by chromatin remodeling (alteration of DNA-nucleosome topology). Specifically binds acetylated lysines on histone 3 and 4 (H3K14ac, H3K9ac, H4K5ac, H4K8ac, H4K12ac, H4K16ac). In the complex, it acts as a tissue-specific anchor between histone acetylations and methylations and chromatin remodeling. It thereby probably plays an essential role in heart and skeletal muscle development. Belongs to the neuron-specific chromatin remodeling complex (nBAF complex). During neural development a switch from a stem/progenitor to a post-mitotic chromatin remodeling mechanism occurs as neurons exit the cell cycle and become committed to their adult state. The transition from proliferating neural stem/progenitor cells to post-mitotic neurons requires a switch in subunit composition of the npBAF and nBAF complexes. As neural progenitors exit mitosis and differentiate into neurons, npBAF complexes which contain ACTL6A/BAF53A and PHF10/BAF45A, are exchanged for homologous alternative ACTL6B/BAF53B and DPF1/BAF45B or DPF3/BAF45C subunits in neuron-specific complexes (nBAF). The npBAF complex is essential for the self-renewal/proliferative capacity of the multipotent neural stem cells. The nBAF complex along with CREST plays a role regulating the activity of genes essential for dendrite growth. Acts as a regulator of myogenesis in cooperation with HDGFL2. Mediates the interaction of HDGFL2 with the BAF complex. HDGFL2-DPF3a activate myogenic genes by increasing chromatin accessibility through recruitment of SMARCA4/BRG1/BAF190A (ATPase subunit of the BAF complex) to myogenic gene promoters. The chain is Zinc finger protein DPF3 (Dpf3) from Mus musculus (Mouse).